Here is a 363-residue protein sequence, read N- to C-terminus: 3-isopropylmalate dehydrogenase (363 aa).

Residue 78–91 (GPKWEHLPPDQQPE) participates in NAD(+) binding. Positions 99, 109, 138, and 227 each coordinate substrate. D227, D251, and D255 together coordinate Mg(2+). 285–297 (GSAPDITGKNIAN) contributes to the NAD(+) binding site.

It belongs to the isocitrate and isopropylmalate dehydrogenases family. LeuB type 1 subfamily. In terms of assembly, homodimer. The cofactor is Mg(2+). Mn(2+) serves as cofactor.

Its subcellular location is the cytoplasm. The catalysed reaction is (2R,3S)-3-isopropylmalate + NAD(+) = 4-methyl-2-oxopentanoate + CO2 + NADH. It functions in the pathway amino-acid biosynthesis; L-leucine biosynthesis; L-leucine from 3-methyl-2-oxobutanoate: step 3/4. Its function is as follows. Catalyzes the oxidation of 3-carboxy-2-hydroxy-4-methylpentanoate (3-isopropylmalate) to 3-carboxy-4-methyl-2-oxopentanoate. The product decarboxylates to 4-methyl-2 oxopentanoate. The polypeptide is 3-isopropylmalate dehydrogenase (Shigella boydii serotype 4 (strain Sb227)).